A 424-amino-acid polypeptide reads, in one-letter code: Adenylosuccinate synthetase (424 aa).

Residues 12–18 (GDEGKGK) and 40–42 (GHT) each bind GTP. The active-site Proton acceptor is Asp-13. Mg(2+)-binding residues include Asp-13 and Gly-40. Residues 13–16 (DEGK), 38–41 (NAGH), Thr-130, Arg-144, Asn-220, Thr-235, and Arg-299 contribute to the IMP site. The active-site Proton donor is His-41. Residue 295–301 (VTTGRKR) participates in substrate binding. GTP contacts are provided by residues Arg-301, 327-329 (KLD), and 412-414 (GTG).

Belongs to the adenylosuccinate synthetase family. Homodimer. Mg(2+) serves as cofactor.

It is found in the cytoplasm. It catalyses the reaction IMP + L-aspartate + GTP = N(6)-(1,2-dicarboxyethyl)-AMP + GDP + phosphate + 2 H(+). It functions in the pathway purine metabolism; AMP biosynthesis via de novo pathway; AMP from IMP: step 1/2. In terms of biological role, plays an important role in the de novo pathway and in the salvage pathway of purine nucleotide biosynthesis. Catalyzes the first committed step in the biosynthesis of AMP from IMP. This Emericella nidulans (strain FGSC A4 / ATCC 38163 / CBS 112.46 / NRRL 194 / M139) (Aspergillus nidulans) protein is Adenylosuccinate synthetase (adB).